The sequence spans 91 residues: Small ribosomal subunit protein uS15 (91 aa).

Belongs to the universal ribosomal protein uS15 family. In terms of assembly, part of the 30S ribosomal subunit. Forms a bridge to the 50S subunit in the 70S ribosome, contacting the 23S rRNA.

In terms of biological role, one of the primary rRNA binding proteins, it binds directly to 16S rRNA where it helps nucleate assembly of the platform of the 30S subunit by binding and bridging several RNA helices of the 16S rRNA. Forms an intersubunit bridge (bridge B4) with the 23S rRNA of the 50S subunit in the ribosome. This Legionella pneumophila (strain Paris) protein is Small ribosomal subunit protein uS15.